The following is a 148-amino-acid chain: NPC intracellular cholesterol transporter 2 homolog a (148 aa).

A signal peptide spans 1–16 (MLRYAVIACAALVVFA). Cystine bridges form between C24-C140, C39-C46, and C92-C99. N51 carries N-linked (GlcNAc...) asparagine glycosylation.

It belongs to the NPC2 family. In terms of tissue distribution, broadly expressed with a higher level of expression in many tissues, including midgut, salivary gland and ventral nerve cord.

It localises to the secreted. In terms of biological role, functions redundantly with Npc2b in regulating sterol homeostasis and ecdysteroid biosynthesis, probably by controlling the availability of sterol substrate. The polypeptide is NPC intracellular cholesterol transporter 2 homolog a (Drosophila melanogaster (Fruit fly)).